Reading from the N-terminus, the 315-residue chain is MLRSSLLPFSYLYEKIINFRNTLYDKGFLKIKKLPVPVISVGNLSVGGSGKTSFVMYLADLLKDKRVCILSRGYKRKSKGTLIVSEYGNLKVSWEEAGDEPYLMAKLLPHVSVVASEDRYKGGLLALEKLSPEVFILDDGFQHRKLHRDLNILLLKKKDLKDRLLPAGNLREPLKEIRRADALVLTYQEVEPFEFFTGKPTFKMFREFCCLLNSDFEEVPFDILKEREVIAFSGLGDNGQFRKVLKNLGIKVKEFMSFPDHYDYSDFTPEEGEIYLTTPKDLIKLQGYENVFALNFKVKLEREEKLKKLIYRIFY.

Residue 45 to 52 (SVGGSGKT) participates in ATP binding.

The protein belongs to the LpxK family.

The enzyme catalyses a lipid A disaccharide + ATP = a lipid IVA + ADP + H(+). Its pathway is glycolipid biosynthesis; lipid IV(A) biosynthesis; lipid IV(A) from (3R)-3-hydroxytetradecanoyl-[acyl-carrier-protein] and UDP-N-acetyl-alpha-D-glucosamine: step 6/6. Transfers the gamma-phosphate of ATP to the 4'-position of a tetraacyldisaccharide 1-phosphate intermediate (termed DS-1-P) to form tetraacyldisaccharide 1,4'-bis-phosphate (lipid IVA). This is Tetraacyldisaccharide 4'-kinase from Aquifex aeolicus (strain VF5).